Reading from the N-terminus, the 316-residue chain is Cuticle collagen 7 (316 aa).

The N-terminal stretch at 1–34 is a signal peptide; the sequence is MSSATFLSVMAGLSGIVVFGALISVFHIYSDINS. Disordered stretches follow at residues 78-269 and 281-316; these read KQSQ…DAAY and HRNV…HVQA. The span at 79 to 90 shows a compositional bias: polar residues; that stretch reads QSQCNCGQQASN. Triple-helical region stretches follow at residues 94 to 126, 139 to 198, and 204 to 263; these read GPPG…AGPS, GLPG…PGKS, and GLPG…DGTP. Composition is skewed to low complexity over residues 110–125, 137–147, and 177–198; these read QPGQ…VAGP, PQGLPGPAGVP, and AGSA…PGKS. Residues 209-221 are compositionally biased toward pro residues; that stretch reads SGAPGPQGPPGAP. Positions 241-260 are enriched in low complexity; sequence PNGQPGHPGQDGQPGAPGND.

Belongs to the cuticular collagen family. As to quaternary structure, collagen polypeptide chains are complexed within the cuticle by disulfide bonds and other types of covalent cross-links.

Functionally, nematode cuticles are composed largely of collagen-like proteins. The cuticle functions both as an exoskeleton and as a barrier to protect the worm from its environment. This is Cuticle collagen 7 (col-7) from Caenorhabditis elegans.